The chain runs to 131 residues: Interleukin-13 (131 aa).

The signal sequence occupies residues 1 to 18; sequence MALWLTLVIALTCFGGLA. 4 N-linked (GlcNAc...) asparagine glycosylation sites follow: Asn-39, Asn-50, Asn-58, and Asn-74. 2 disulfide bridges follow: Cys-49–Cys-78 and Cys-66–Cys-92.

The protein belongs to the IL-4/IL-13 family. Interacts with IL13RA2.

Its subcellular location is the secreted. Its function is as follows. Cytokine that plays important roles in allergic inflammation and immune response to parasite infection. Synergizes with IL2 in regulating interferon-gamma synthesis. Stimulates B-cell proliferation, and activation of eosinophils, basophils, and mast cells. Plays an important role in controlling IL33 activity by modulating the production of transmembrane and soluble forms of interleukin-1 receptor-like 1/IL1RL1. Displays the capacity to antagonize Th1-driven proinflammatory immune response and downregulates synthesis of many proinflammatory cytokines including IL1, IL6, IL10, IL12 and TNF-alpha through a mechanism that partially involves suppression of NF-kappa-B. Also functions on nonhematopoietic cells, including endothelial cells where it induces vascular cell adhesion protein 1/VCAM1, which is important in the recruitment of eosinophils. Exerts its biological effects through its receptors which comprises the IL4R chain and the IL13RA1 chain, to activate JAK1 and TYK2, leading to the activation of STAT6. Aside from IL13RA1, another receptor IL13RA2 acts as a high affinity decoy for IL13 and mediates internalization and depletion of extracellular IL13. The protein is Interleukin-13 (IL13) of Sus scrofa (Pig).